The primary structure comprises 185 residues: Peptidyl-tRNA hydrolase (185 aa).

Residue Y14 participates in tRNA binding. Residue H19 is the Proton acceptor of the active site. Residues F64, N66, and N112 each contribute to the tRNA site.

It belongs to the PTH family. Monomer.

It is found in the cytoplasm. The catalysed reaction is an N-acyl-L-alpha-aminoacyl-tRNA + H2O = an N-acyl-L-amino acid + a tRNA + H(+). Its function is as follows. Hydrolyzes ribosome-free peptidyl-tRNAs (with 1 or more amino acids incorporated), which drop off the ribosome during protein synthesis, or as a result of ribosome stalling. Functionally, catalyzes the release of premature peptidyl moieties from peptidyl-tRNA molecules trapped in stalled 50S ribosomal subunits, and thus maintains levels of free tRNAs and 50S ribosomes. In Halalkalibacterium halodurans (strain ATCC BAA-125 / DSM 18197 / FERM 7344 / JCM 9153 / C-125) (Bacillus halodurans), this protein is Peptidyl-tRNA hydrolase.